A 334-amino-acid polypeptide reads, in one-letter code: Nucleoid-associated protein ESA_01050 (334 aa).

This sequence belongs to the YejK family.

The protein resides in the cytoplasm. It localises to the nucleoid. In Cronobacter sakazakii (strain ATCC BAA-894) (Enterobacter sakazakii), this protein is Nucleoid-associated protein ESA_01050.